We begin with the raw amino-acid sequence, 268 residues long: Zinc finger protein SNAI2 (268 aa).

Residues M1–S20 form an SNAG domain region. The segment at P80–L117 is disordered. 4 C2H2-type zinc fingers span residues F128–H150, F159–H181, C185–H207, and F213–H235. The C2H2-type 5; atypical zinc-finger motif lies at Y241–C264.

The protein belongs to the snail C2H2-type zinc-finger protein family. Interacts (via SNAG domain) with LIMD1 (via LIM domains), WTIP (via LIM domains) and AJUBA (via LIM domains). Interacts (via zinc fingers) with KPNA2, KPNB1, and TNPO1. May interact (via zinc fingers) with IPO7. Post-translationally, phosphorylated by GSK3B. Once phosphorylated, it becomes a target for ubiquitination. In terms of processing, ubiquitinated by the SCF(FBXO11) complex; ubiquitination requires previous GSK3B-mediated SNAI2 phosphorylation.

It is found in the nucleus. The protein localises to the cytoplasm. Transcriptional repressor that modulates both activator-dependent and basal transcription. Involved in the generation and migration of neural crest cells. Plays a role in mediating RAF1-induced transcriptional repression of the TJ protein, occludin (OCLN) and subsequent oncogenic transformation of epithelial cells. Represses BRCA2 expression by binding to its E2-box-containing silencer and recruiting CTBP1 and HDAC1 in breast cells. In epidermal keratinocytes, binds to the E-box in ITGA3 promoter and represses its transcription. Involved in the regulation of ITGB1 and ITGB4 expression and cell adhesion and proliferation in epidermal keratinocytes. Binds to E-box2 domain of BSG and activates its expression during TGFB1-induced epithelial-mesenchymal transition (EMT) in hepatocytes. Represses E-Cadherin/CDH1 transcription via E-box elements. Involved in osteoblast maturation. Binds to RUNX2 and SOC9 promoters and may act as a positive and negative transcription regulator, respectively, in osteoblasts. Binds to CXCL12 promoter via E-box regions in mesenchymal stem cells and osteoblasts. Plays an essential role in TWIST1-induced EMT and its ability to promote invasion and metastasis. This is Zinc finger protein SNAI2 (SNAI2) from Bos taurus (Bovine).